A 288-amino-acid chain; its full sequence is PAK4-inhibitor inka2 (288 aa).

The inka box stretch occupies residues 159 to 196; the sequence is DPTDWTTSLLTRGRNRQPLVLGDNSFADLIKNWMDLPE.

This sequence belongs to the INKA family.

Its subcellular location is the nucleus. Inhibitor of the serine/threonine-protein kinase pak4/pak5. Acts by binding pak4/pak5 in a substrate-like manner, inhibiting the protein kinase activity. The chain is PAK4-inhibitor inka2 from Danio rerio (Zebrafish).